The sequence spans 213 residues: Ephrin-A2 (213 aa).

The N-terminal stretch at 1-24 (MAPAQRPLLPLLLLLLPLPPPPFA) is a signal peptide. Residues 34–174 (SDRYAVYWNR…RLKVYVRPTN (141 aa)) enclose the Ephrin RBD domain. An N-linked (GlcNAc...) asparagine glycan is attached at Asn-42. Disulfide bonds link Cys-73–Cys-114 and Cys-102–Cys-163. Asn-174 and Asn-188 each carry an N-linked (GlcNAc...) asparagine glycan. Residue Asn-188 is the site of GPI-anchor amidated asparagine attachment. The propeptide at 189–213 (NSCSSPGGCRLFLSTIPVLWTLLGS) is removed in mature form.

Belongs to the ephrin family. As to quaternary structure, binds to the receptor tyrosine kinases EPHA3, EPHA4 and EPHA5. Interacts with EPHA8; activates EPHA8.

The protein localises to the cell membrane. Its function is as follows. Cell surface GPI-bound ligand for Eph receptors, a family of receptor tyrosine kinases which are crucial for migration, repulsion and adhesion during neuronal, vascular and epithelial development. Binds promiscuously Eph receptors residing on adjacent cells, leading to contact-dependent bidirectional signaling into neighboring cells. The signaling pathway downstream of the receptor is referred to as forward signaling while the signaling pathway downstream of the ephrin ligand is referred to as reverse signaling. With the EPHA2 receptor may play a role in bone remodeling through regulation of osteoclastogenesis and osteoblastogenesis. The sequence is that of Ephrin-A2 (EFNA2) from Homo sapiens (Human).